A 155-amino-acid polypeptide reads, in one-letter code: Fibroblast growth factor 2 (155 aa).

A propeptide spanning residues 1 to 9 is cleaved from the precursor; it reads MAAGSITTL. A disordered region spans residues 1-20; sequence MAAGSITTLPALPEDGGSGA. Asn36 is a heparin binding site. The Cell attachment site; atypical motif lies at 46 to 48; that stretch reads DGR. Tyr82 carries the post-translational modification Phosphotyrosine; by TEC. Residues 88–90 carry the Cell attachment site; atypical motif; it reads DGR. A Glycyl lysine isopeptide (Lys-Gly) (interchain with G-Cter in SUMO1) cross-link involves residue Lys95. Residues 128 to 144 form a heparin-binding region; sequence KRTGQYKLGPKTGPGQK.

The protein belongs to the heparin-binding growth factors family. As to quaternary structure, monomer. Homodimer. Interacts with FGFR1, FGFR2, FGFR3 and FGFR4. Affinity between fibroblast growth factors (FGFs) and their receptors is increased by heparan sulfate glycosaminoglycans that function as coreceptors. Interacts with CSPG4, FGFBP1 and TEC. Found in a complex with FGFBP1, FGF1 and FGF2. Interacts with FGFBP3. Interacts with integrin ITGAV:ITGB3; the interaction is required for FGF2 signaling. Interacts with SNORC (via the extracellular domain). Interacts with glypican GPC3. In terms of processing, phosphorylation at Tyr-82 regulates FGF2 unconventional secretion.

Its subcellular location is the secreted. The protein resides in the nucleus. Acts as a ligand for FGFR1, FGFR2, FGFR3 and FGFR4. Also acts as an integrin ligand which is required for FGF2 signaling. Binds to integrin ITGAV:ITGB3. Plays an important role in the regulation of cell survival, cell division, cell differentiation and cell migration. Functions as a potent mitogen in vitro. Can induce angiogenesis. Mediates phosphorylation of ERK1/2 and thereby promotes retinal lens fiber differentiation. The polypeptide is Fibroblast growth factor 2 (FGF2) (Bos taurus (Bovine)).